Reading from the N-terminus, the 519-residue chain is F-box only protein 31-A (519 aa).

The interval 11 to 37 (GQSGGCRRRQQRKGAGNDPELEDEEEE) is disordered. The region spanning 54-100 (PHSLLLLPPEILVEIFSLLPGTELGGLAQVCSKFRQILTTDTIWKRR) is the F-box domain. Positions 196, 204, 220, and 226 each coordinate Zn(2+). Positions 369-390 (REQRQTDNEEDDGRGAGPDKAE) are enriched in basic and acidic residues. The tract at residues 369–424 (REQRQTDNEEDDGRGAGPDKAEPAQQPAPLLRPPNEDANGADDDGDGGEQKPPNVQ) is disordered.

This sequence belongs to the FBXO31 family. As to quaternary structure, part of a SCF (SKP1-cullin-F-box) protein ligase complex SCF(FBXO31).

Its subcellular location is the cytoplasm. It participates in protein modification; protein ubiquitination. Substrate-recognition component of the SCF(FBXO31) protein ligase complex, which specifically mediates the ubiquitination of proteins amidated at their C-terminus in response to oxidative stress, leading to their degradation by the proteasome. Fbxo31 specifically recognizes and binds C-terminal peptides bearing an amide: C-terminal amidation in response to oxidative stress takes place following protein fragmentation. The SCF(FBXO31) also plays a role in G1 arrest following DNA damage by mediating ubiquitination of phosphorylated cyclin-D1 (ccnd1), promoting its degradation by the proteasome, resulting in G1 arrest. The SCF(FBXO31) complex is however not a major regulator of ccnd1 stability during the G1/S transition. This is F-box only protein 31-A (fbxo31-a) from Xenopus laevis (African clawed frog).